Here is a 271-residue protein sequence, read N- to C-terminus: 3-methyl-2-oxobutanoate hydroxymethyltransferase (271 aa).

Mg(2+) is bound by residues Asp-53 and Asp-92. 3-methyl-2-oxobutanoate is bound by residues 53 to 54 (DS), Asp-92, and Lys-120. Mg(2+) is bound at residue Glu-122. The active-site Proton acceptor is the Glu-189.

This sequence belongs to the PanB family. As to quaternary structure, homodecamer; pentamer of dimers. Mg(2+) serves as cofactor.

It is found in the cytoplasm. It catalyses the reaction 3-methyl-2-oxobutanoate + (6R)-5,10-methylene-5,6,7,8-tetrahydrofolate + H2O = 2-dehydropantoate + (6S)-5,6,7,8-tetrahydrofolate. It functions in the pathway cofactor biosynthesis; (R)-pantothenate biosynthesis; (R)-pantoate from 3-methyl-2-oxobutanoate: step 1/2. Catalyzes the reversible reaction in which hydroxymethyl group from 5,10-methylenetetrahydrofolate is transferred onto alpha-ketoisovalerate to form ketopantoate. The polypeptide is 3-methyl-2-oxobutanoate hydroxymethyltransferase (Burkholderia multivorans (strain ATCC 17616 / 249)).